Here is a 78-residue protein sequence, read N- to C-terminus: Large ribosomal subunit protein uL29 (78 aa).

It belongs to the universal ribosomal protein uL29 family.

The protein is Large ribosomal subunit protein uL29 of Rhodococcus erythropolis (strain PR4 / NBRC 100887).